A 394-amino-acid chain; its full sequence is METPVGLRFCPTDEEIVVDYLWPKNSDRDTSHVDRFINTVPVCRLDPWELPCQSRIKLKDVAWCFFRPKENKYGRGDQQMRKTKSGFWKSTGRPKPIMRNRQQIGEKKILMFYTSKESKSDWVIHEYHGFSHNQMMMTYTLCKVMFNGGMREKSSSSPSSSGVSGIEQSRRDSLIPQLVNNSEGSSLHREDPSQFGDVLQEAPIEDAKLTEELVKWLMNDEDDAQIEDAIPIEEWETWLNDIDDAKEKSIMFMHDNRSDYRPPNSLTGVFSDDVSSDDNDSDLLTPKTNSIQTSSTCDSFGSSNHRIDQIKDLQESPTSTINLVSLTQEVSQALITSIDTAEKKKNPYDDAQGTEIGEHKLGQETIKKKRAGFFHRMIQKFVKKIHLCSSISRT.

One can recognise an NAC domain in the interval 3 to 147 (TPVGLRFCPT…TYTLCKVMFN (145 aa)). A DNA-binding region spans residues 104 to 153 (IGEKKILMFYTSKESKSDWVIHEYHGFSHNQMMMTYTLCKVMFNGGMREK). Disordered stretches follow at residues 152 to 173 (EKSSSSPSSSGVSGIEQSRRDS) and 264 to 300 (NSLTGVFSDDVSSDDNDSDLLTPKTNSIQTSSTCDSF). Residues 155–165 (SSSPSSSGVSG) show a composition bias toward low complexity. A compositionally biased stretch (polar residues) spans 286-300 (PKTNSIQTSSTCDSF).

The protein resides in the nucleus. The chain is NAC domain-containing protein 3 (NAC003) from Arabidopsis thaliana (Mouse-ear cress).